We begin with the raw amino-acid sequence, 336 residues long: Terephthalate 1,2-dioxygenase, reductase component 2 (336 aa).

A 2Fe-2S ferredoxin-type domain is found at 3–91; the sequence is HQIHIHDSDI…DIRIHPSSFR (89 aa). C37, C42, C45, and C75 together coordinate [2Fe-2S] cluster. Residues 98–197 form the FAD-binding FR-type domain; the sequence is RKRFTAKVYS…ELPFGSIALK (100 aa).

In terms of assembly, monomer. Part of a multicomponent enzyme system composed of a reductase (TphA1I or TphA1II) and a two-subunit oxygenase component (TphA2I or TphA2II and TphA3I or TphA3II). It depends on FAD as a cofactor. Requires [2Fe-2S] cluster as cofactor.

It carries out the reaction terephthalate + NADH + O2 + H(+) = (3S,4R)-3,4-dihydroxycyclohexa-1,5-diene-1,4-dicarboxylate + NAD(+). Functionally, component of the terephthalate 1,2-dioxygenase multicomponent enzyme system which catalyzes the dioxygenation of terephthalate (TER/TPA) to 1,2-dihydroxy-3,5-cyclohexadiene-1,4-dicarboxylic acid (DCD). TphA1 probably reduces TphA2A3. It can also use 2,5-dicarboxypyridine (PDC) and 1,4-napthalenedicarboxylic acid (NDC) as substrates, and preferentially uses NADPH which is the physiological electron donor. The polypeptide is Terephthalate 1,2-dioxygenase, reductase component 2 (tphA1II) (Comamonas sp).